Consider the following 142-residue polypeptide: Nucleoside diphosphate kinase (142 aa).

ATP is bound by residues Lys-11, Phe-59, Arg-87, Thr-93, Arg-104, and Asn-114. Residue His-117 is the Pros-phosphohistidine intermediate of the active site.

The protein belongs to the NDK family. Homotetramer. Mg(2+) serves as cofactor.

It localises to the cytoplasm. It carries out the reaction a 2'-deoxyribonucleoside 5'-diphosphate + ATP = a 2'-deoxyribonucleoside 5'-triphosphate + ADP. The enzyme catalyses a ribonucleoside 5'-diphosphate + ATP = a ribonucleoside 5'-triphosphate + ADP. Major role in the synthesis of nucleoside triphosphates other than ATP. The ATP gamma phosphate is transferred to the NDP beta phosphate via a ping-pong mechanism, using a phosphorylated active-site intermediate. This chain is Nucleoside diphosphate kinase, found in Pectobacterium atrosepticum (strain SCRI 1043 / ATCC BAA-672) (Erwinia carotovora subsp. atroseptica).